The sequence spans 264 residues: MQKASHKNKKERGVSNKVKTSVHNLSKTQQTKLTVGSLGLGLIIIQHGPYLQITHLIRKGAAANDGKLQPGDVLISVGHANVLGYTLREFLQLLQHITIGTVLQIKVYRDFINIPEEWQEIYDLIPEAKFPVTSTPKKIELAKDESFTSSDDNENVDLDKRLQYYRYPWSTVHHPARRPISISRDWHGYKKKNHTISVGKDINCDVMIHRDDKKEVRAPSPYWIMVKQDNESSSSSTSSTSDAFWLEDCAQVEEGKAQLVSKVG.

Residues 30 to 109 (QTKLTVGSLG…GTVLQIKVYR (80 aa)) enclose the PDZ domain.

This chain is PDZ domain-containing protein 9 (PDZD9), found in Homo sapiens (Human).